The following is a 541-amino-acid chain: Phosphoenolpyruvate carboxykinase (ATP) (541 aa).

3 residues coordinate substrate: arginine 64, tyrosine 206, and lysine 212. ATP is bound by residues lysine 212, histidine 231, and 247-255; that span reads GLSGTGKTT. Residues lysine 212 and histidine 231 each contribute to the Mn(2+) site. Mn(2+) is bound at residue aspartate 268. Glutamate 296, arginine 332, and threonine 454 together coordinate ATP. Residue arginine 332 coordinates substrate.

Belongs to the phosphoenolpyruvate carboxykinase (ATP) family. As to quaternary structure, monomer. Mn(2+) is required as a cofactor.

It is found in the cytoplasm. The enzyme catalyses oxaloacetate + ATP = phosphoenolpyruvate + ADP + CO2. The protein operates within carbohydrate biosynthesis; gluconeogenesis. Involved in the gluconeogenesis. Catalyzes the conversion of oxaloacetate (OAA) to phosphoenolpyruvate (PEP) through direct phosphoryl transfer between the nucleoside triphosphate and OAA. This chain is Phosphoenolpyruvate carboxykinase (ATP), found in Wigglesworthia glossinidia brevipalpis.